A 311-amino-acid polypeptide reads, in one-letter code: Replicative helicase loader DnaI (311 aa).

The N-terminal domain (Nd) stretch occupies residues methionine 1 to isoleucine 136. Residues cysteine 67, cysteine 70, histidine 84, and cysteine 101 each contribute to the Zn(2+) site. A C-terminal domain (Cd) region spans residues serine 137–proline 311. Glycine 168–threonine 175 lines the ATP pocket.

This sequence belongs to the DnaI family. The DNA replisome assembles sequentially on oriC in this order; DnaA, DnaD, DnaB, DnaI-DnaC helicase. Monomer with a very minor amount of dimer in solution. Interacts with replicative helicase (from G.stearothermophilus, called DnaB); this interaction is disrupted by DnaD. Interacts with replicative helicase DnaC, forms a DnaC(6):DnaI(6) complex. Interacts with the helicase as 3 dimers. A stable complex with DnaG primase, DnaI(6):helicase(6):DnaG(3) fragment can be isolated; DnaI and DnaG do not contact each other (helicase and DnaG in this complex are derived from G.stearothermophilus). Requires Zn(2+) as cofactor.

It is found in the cytoplasm. It catalyses the reaction ATP + H2O = ADP + phosphate + H(+). In terms of biological role, helps load the DnaC replicative helicase onto single-stranded (ss)DNA and simulates the helicase activity; in the presence of DnaB more helicase activity is seen. Regulates DnaC helicase activity, at low concentrations stimulates the DNA helicase and ATPase activities of DnaC. Has no measurable ATPase activity after 1 hour incubation of 6 uM DnaI with or without DNA. Another group has found the protein has weak ATPase activity that is not stimulated by ssDNA. Whole protein binds forked DNA (but not ssDNA) weakly; ATP and ADPNP (probably 5'-adenylyl beta, gamma-imidodiphosphate) have no effect on DNA binding. DnaB, DnaD and DnaI may be required for a PriA-independent pathway of replication fork restart. The protein is Replicative helicase loader DnaI of Bacillus subtilis (strain 168).